Reading from the N-terminus, the 1230-residue chain is Cullin-associated NEDD8-dissociated protein 1 (1230 aa).

Ala-2 carries the N-acetylalanine modification. 12 HEAT repeats span residues 2-39 (ASAS…KDSI), 44-81 (DSER…KVKE), 83-119 (QVET…ELPP), 131-165 (CKKI…LSRQ), 171-208 (NFHP…SCGN), 210-247 (VFVD…QAGH), 248-282 (RIGE…FESF), 289-366 (EVYP…TRHE), 370-407 (EFYK…QTRP), 424-467 (PLTM…VLPG), 471-510 (QHIP…NHSP), and 515-552 (PHVQ…VIRP). Position 55 is an N6-acetyllysine (Lys-55). A disordered region spans residues 315 to 344 (DEDEDENAMDADGGDDDDQGSDDEYSDDDD). Phosphoserine is present on Ser-335. Ser-558 carries the post-translational modification Phosphoserine. 15 HEAT repeats span residues 563–602 (PYIK…NLGD), 606–643 (PDLS…LKID), 646–683 (PVLG…NYSD), 688–725 (AMID…VYPS), 729–768 (KISG…TGTN), 770–808 (LGYM…ALTR), 809–845 (ACPK…LGEV), 852–889 (SGQL…GNLP), 890–927 (EYLP…GLKP), 928–960 (YVEN…KLTL), 961–998 (IDPE…DHPQ), 1002–1039 (PLLK…NKPS), 1043–1097 (DLLD…DSCL), 1099–1133 (RLDI…LSTL), and 1140–1189 (QRLD…IPEA). N6-acetyllysine is present on Lys-971.

This sequence belongs to the CAND family. In terms of assembly, interacts with TBP. Part of a complex that contains CUL1 and RBX1. Interacts with unneddylated cullins: interacts with CUL1, CUL2, CUL3, CUL4A, CUL4B and CUL5. Does not bind neddylated CUL1. Interaction with cullins is abolished in presence of COMMD1, which antagonizes with CAND1 for interacting with cullins. Interacts with ERCC6. Interacts with DCUN1D1, DCUN1D2, DCUN1D3, DCUN1D4 and DCUN1D5; these interactions are bridged by cullins and strongly inhibits the neddylation of cullins. As to expression, detected in heart, brain, spleen, liver, skeletal muscle, kidney and testis.

It is found in the cytoplasm. It localises to the nucleus. Key assembly factor of SCF (SKP1-CUL1-F-box protein) E3 ubiquitin ligase complexes that promotes the exchange of the substrate-recognition F-box subunit in SCF complexes, thereby playing a key role in the cellular repertoire of SCF complexes. Acts as a F-box protein exchange factor. The exchange activity of CAND1 is coupled with cycles of neddylation conjugation: in the deneddylated state, cullin-binding CAND1 binds CUL1-RBX1, increasing dissociation of the SCF complex and promoting exchange of the F-box protein. Probably plays a similar role in other cullin-RING E3 ubiquitin ligase complexes. May indirectly enhance transcription from various types of promoters. This is Cullin-associated NEDD8-dissociated protein 1 (Cand1) from Rattus norvegicus (Rat).